The following is a 359-amino-acid chain: Type II methyltransferase M.HinfI (359 aa).

The 84-residue stretch at 275–358 (KVPMKTLIEA…LDSLRYEYTN (84 aa)) folds into the RAMA domain.

It belongs to the N(4)/N(6)-methyltransferase family.

The enzyme catalyses a 2'-deoxyadenosine in DNA + S-adenosyl-L-methionine = an N(6)-methyl-2'-deoxyadenosine in DNA + S-adenosyl-L-homocysteine + H(+). Its function is as follows. A beta subtype methylase that recognizes the double-stranded sequence 5'-GANTC-3', methylates A-2 on both strands, and protects the DNA from cleavage by the HinfI endonuclease. This chain is Type II methyltransferase M.HinfI (hinfIM), found in Haemophilus influenzae.